Consider the following 225-residue polypeptide: Putative ATP-dependent Clp protease proteolytic subunit-like (225 aa).

Belongs to the peptidase S14 family.

Its function is as follows. Has lost the two conserved residues (Ser and His) proposed to be part of the active site. Therefore it could be inactive. The chain is Putative ATP-dependent Clp protease proteolytic subunit-like (clpR) from Synechocystis sp. (strain ATCC 27184 / PCC 6803 / Kazusa).